The sequence spans 1036 residues: Isoleucine--tRNA ligase (1036 aa).

A 'HIGH' region motif is present at residues 46 to 56; sequence PFATGLPHYGH. The 'KMSKS' region signature appears at 589-593; the sequence is KMSKR. Lysine 592 serves as a coordination point for ATP.

Belongs to the class-I aminoacyl-tRNA synthetase family. IleS type 2 subfamily. As to quaternary structure, monomer. Requires Zn(2+) as cofactor.

The protein resides in the cytoplasm. The enzyme catalyses tRNA(Ile) + L-isoleucine + ATP = L-isoleucyl-tRNA(Ile) + AMP + diphosphate. Its function is as follows. Catalyzes the attachment of isoleucine to tRNA(Ile). As IleRS can inadvertently accommodate and process structurally similar amino acids such as valine, to avoid such errors it has two additional distinct tRNA(Ile)-dependent editing activities. One activity is designated as 'pretransfer' editing and involves the hydrolysis of activated Val-AMP. The other activity is designated 'posttransfer' editing and involves deacylation of mischarged Val-tRNA(Ile). The chain is Isoleucine--tRNA ligase from Chlamydia muridarum (strain MoPn / Nigg).